The sequence spans 494 residues: Nuclear distribution protein PAC1 (494 aa).

The LisH domain maps to 14 to 46 (QKNELDKSVLRYLNWNYKQTVRHEHAQDYESVR). Residues 90–123 (NSIVRLQKKIIELEQNTETLVSQIKDLNTQVSEL) adopt a coiled-coil conformation. WD repeat units lie at residues 153 to 192 (NVESSVTSVKLHPNLPIVFVATDHGKLYAFDLFNYTIPLA), 196 to 244 (SHTK…CKFQ), 251 to 292 (GHEH…SLKT), 295 to 334 (PHSQWVRSIDVLGDYIISGSHDTTLRLTHWPSGNGLSVGT), 347 to 395 (HFIE…LMAH), 415 to 454 (GHLSWVRDISIRGQYLFSCADDKSVRCWDLNTGQCLHVWE), and 457 to 492 (HTGFVNCLDLDVDFDSNVTPRQMMVTGGLDCKSNVF).

The protein belongs to the WD repeat LIS1/nudF family. As to quaternary structure, self-associates. Interacts with NDL1 and dynein.

The protein resides in the cytoplasm. Its subcellular location is the cytoskeleton. The protein localises to the spindle pole. Its function is as follows. Positively regulates the activity of the minus-end directed microtubule motor protein dynein. Plays a central role in positioning the mitotic spindle at the bud neck during cell division. Targets cytoplasmic dynein to microtubule plus ends, thereby promoting dynein-mediated microtubule sliding along the bud cortex and consequently the movement of the mitotic spindle to the bud neck. The chain is Nuclear distribution protein PAC1 from Saccharomyces cerevisiae (strain YJM789) (Baker's yeast).